We begin with the raw amino-acid sequence, 171 residues long: Large ribosomal subunit protein uL24 (171 aa).

Residues 1 to 124 (MNIKTGDTVV…AKPAKTKAEK (124 aa)) form a large ribosomal subunit protein uL24 region. A disordered region spans residues 108–171 (GQTLDKAAKP…SVQKKGASGK (64 aa)). The unknown stretch occupies residues 125–171 (VEKAATSSTDKPAKVTKAAKEAKPVKAVKSQKVEKNTSVQKKGASGK).

It belongs to the universal ribosomal protein uL24 family. As to quaternary structure, part of the 50S ribosomal subunit.

Functionally, one of two assembly initiator proteins, it binds directly to the 5'-end of the 23S rRNA, where it nucleates assembly of the 50S subunit. Its function is as follows. One of the proteins that surrounds the polypeptide exit tunnel on the outside of the subunit. The protein is Large ribosomal subunit protein uL24 of Acholeplasma laidlawii (strain PG-8A).